The following is a 376-amino-acid chain: Queuine tRNA-ribosyltransferase (376 aa).

D92 serves as the catalytic Proton acceptor. Substrate contacts are provided by residues 92-96 (DSGGF), D146, Q190, and G217. The segment at 248–254 (GVGRPED) is RNA binding. The active-site Nucleophile is D267. The interval 272-276 (TRNAR) is RNA binding; important for wobble base 34 recognition. 4 residues coordinate Zn(2+): C305, C307, C310, and H337.

The protein belongs to the queuine tRNA-ribosyltransferase family. In terms of assembly, homodimer. Within each dimer, one monomer is responsible for RNA recognition and catalysis, while the other monomer binds to the replacement base PreQ1. Zn(2+) is required as a cofactor.

The enzyme catalyses 7-aminomethyl-7-carbaguanine + guanosine(34) in tRNA = 7-aminomethyl-7-carbaguanosine(34) in tRNA + guanine. The protein operates within tRNA modification; tRNA-queuosine biosynthesis. Functionally, catalyzes the base-exchange of a guanine (G) residue with the queuine precursor 7-aminomethyl-7-deazaguanine (PreQ1) at position 34 (anticodon wobble position) in tRNAs with GU(N) anticodons (tRNA-Asp, -Asn, -His and -Tyr). Catalysis occurs through a double-displacement mechanism. The nucleophile active site attacks the C1' of nucleotide 34 to detach the guanine base from the RNA, forming a covalent enzyme-RNA intermediate. The proton acceptor active site deprotonates the incoming PreQ1, allowing a nucleophilic attack on the C1' of the ribose to form the product. After dissociation, two additional enzymatic reactions on the tRNA convert PreQ1 to queuine (Q), resulting in the hypermodified nucleoside queuosine (7-(((4,5-cis-dihydroxy-2-cyclopenten-1-yl)amino)methyl)-7-deazaguanosine). This Stenotrophomonas maltophilia (strain K279a) protein is Queuine tRNA-ribosyltransferase.